The chain runs to 487 residues: Cytochrome P450 2C16 (487 aa).

Cys-432 provides a ligand contact to heme.

Belongs to the cytochrome P450 family. Heme serves as cofactor. Expressed constitutively in liver, lung, testes, and kidney.

Its subcellular location is the endoplasmic reticulum membrane. It localises to the microsome membrane. The enzyme catalyses an organic molecule + reduced [NADPH--hemoprotein reductase] + O2 = an alcohol + oxidized [NADPH--hemoprotein reductase] + H2O + H(+). Cytochromes P450 are a group of heme-thiolate monooxygenases. In liver microsomes, this enzyme is involved in an NADPH-dependent electron transport pathway. It oxidizes a variety of structurally unrelated compounds, including steroids, fatty acids, and xenobiotics. In Oryctolagus cuniculus (Rabbit), this protein is Cytochrome P450 2C16 (CYP2C16).